Consider the following 631-residue polypeptide: Phosphomethylpyrimidine synthase (631 aa).

Residues Asn239, Met268, Tyr297, His333, 353–355 (SRG), 394–397 (DGLR), and Glu433 contribute to the substrate site. His437 is a binding site for Zn(2+). Substrate is bound at residue Tyr460. A Zn(2+)-binding site is contributed by His501. [4Fe-4S] cluster-binding residues include Cys581, Cys584, and Cys589.

This sequence belongs to the ThiC family. Homodimer. The cofactor is [4Fe-4S] cluster.

The enzyme catalyses 5-amino-1-(5-phospho-beta-D-ribosyl)imidazole + S-adenosyl-L-methionine = 4-amino-2-methyl-5-(phosphooxymethyl)pyrimidine + CO + 5'-deoxyadenosine + formate + L-methionine + 3 H(+). It functions in the pathway cofactor biosynthesis; thiamine diphosphate biosynthesis. Its function is as follows. Catalyzes the synthesis of the hydroxymethylpyrimidine phosphate (HMP-P) moiety of thiamine from aminoimidazole ribotide (AIR) in a radical S-adenosyl-L-methionine (SAM)-dependent reaction. In Klebsiella pneumoniae (strain 342), this protein is Phosphomethylpyrimidine synthase.